A 356-amino-acid chain; its full sequence is Protein-arginine kinase (356 aa).

Residues 24-254 (IVLSTRIRLA…HQLIQQEKAA (231 aa)) enclose the Phosphagen kinase C-terminal domain. ATP contacts are provided by residues 27–31 (STRIR), His-92, Arg-125, 176–180 (RASVM), and 207–212 (RGIYGE). Residues 337–342 (RDYRRA) carry the RDXXRA motif of the pArg binding pocket involved in allosteric regulation motif.

This sequence belongs to the ATP:guanido phosphotransferase family.

The enzyme catalyses L-arginyl-[protein] + ATP = N(omega)-phospho-L-arginyl-[protein] + ADP + H(+). Its activity is regulated as follows. Appears to be allosterically activated by the binding of pArg-containing polypeptides to the pArg-binding pocket localized in the C-terminal domain of McsB. Catalyzes the specific phosphorylation of arginine residues in a large number of proteins. Is part of the bacterial stress response system. Protein arginine phosphorylation has a physiologically important role and is involved in the regulation of many critical cellular processes, such as protein homeostasis, motility, competence, and stringent and stress responses, by regulating gene expression and protein activity. This chain is Protein-arginine kinase, found in Bacillus cytotoxicus (strain DSM 22905 / CIP 110041 / 391-98 / NVH 391-98).